We begin with the raw amino-acid sequence, 22 residues long: Caerin-3.1 (22 aa).

The residue at position 22 (lysine 22) is a Lysine amide.

Belongs to the frog skin active peptide (FSAP) family. Caerin subfamily. In terms of tissue distribution, expressed by the skin dorsal glands.

Its subcellular location is the secreted. Functionally, antibacterial peptide with narrow spectrum of activity. Inhibits the formation of NO by neuronal nitric oxide synthase. This Litoria rothii (Roth's tree frog) protein is Caerin-3.1.